Consider the following 133-residue polypeptide: Methylglyoxal synthase (133 aa).

The MGS-like domain occupies M1–G133. Residues H12, K16, T38 to T41, and S58 to G59 contribute to the substrate site. Catalysis depends on D64, which acts as the Proton donor/acceptor. H91 serves as a coordination point for substrate.

Belongs to the methylglyoxal synthase family.

The catalysed reaction is dihydroxyacetone phosphate = methylglyoxal + phosphate. Functionally, catalyzes the formation of methylglyoxal from dihydroxyacetone phosphate. This chain is Methylglyoxal synthase, found in Cupriavidus taiwanensis (strain DSM 17343 / BCRC 17206 / CCUG 44338 / CIP 107171 / LMG 19424 / R1) (Ralstonia taiwanensis (strain LMG 19424)).